A 236-amino-acid chain; its full sequence is Syntaxin-8 (236 aa).

Residues 1-215 (MAPDPWFSTY…LVDRKSTSCG (215 aa)) are Cytoplasmic-facing. Residues 42–65 (VTIRALLQKLKEKIALLKDLLLRA) are a coiled coil. Positions 145–207 (QKIIQEQDAG…RTETRRVNLV (63 aa)) constitute a t-SNARE coiled-coil homology domain. Ser-160 is subject to Phosphoserine. The chain crosses the membrane as a helical; Anchor for type IV membrane protein span at residues 216–232 (MIMVILLLLVAIVVVAV). Residues 233-236 (WPTK) are Vesicular-facing.

Belongs to the syntaxin family. In terms of assembly, forms a SNARE complex with STX7, VTI1B and VAMP8 which functions in the homotypic fusion of late endosomes. Part of the SNARE core complex containing STX7, VAMP8 and VTI1B. Interacts with VAMP8. Interacts with HECTD3. Interacts with TPC1. Ubiquitinated by HECTD3.

The protein resides in the membrane. Functionally, vesicle trafficking protein that functions in the early secretory pathway, possibly by mediating retrograde transport from cis-Golgi membranes to the ER. The polypeptide is Syntaxin-8 (STX8) (Bos taurus (Bovine)).